Consider the following 1070-residue polypeptide: DNA-directed RNA polymerase subunit beta (1070 aa).

It belongs to the RNA polymerase beta chain family. As to quaternary structure, in plastids the minimal PEP RNA polymerase catalytic core is composed of four subunits: alpha, beta, beta', and beta''. When a (nuclear-encoded) sigma factor is associated with the core the holoenzyme is formed, which can initiate transcription.

The protein localises to the plastid. It is found in the chloroplast. It carries out the reaction RNA(n) + a ribonucleoside 5'-triphosphate = RNA(n+1) + diphosphate. Its function is as follows. DNA-dependent RNA polymerase catalyzes the transcription of DNA into RNA using the four ribonucleoside triphosphates as substrates. This chain is DNA-directed RNA polymerase subunit beta, found in Silene latifolia (White campion).